We begin with the raw amino-acid sequence, 184 residues long: ATP synthase subunit b, chloroplastic (184 aa).

Residues 27–49 traverse the membrane as a helical segment; that stretch reads LATNPINLSVVLGVLIFFGKGVL.

This sequence belongs to the ATPase B chain family. F-type ATPases have 2 components, F(1) - the catalytic core - and F(0) - the membrane proton channel. F(1) has five subunits: alpha(3), beta(3), gamma(1), delta(1), epsilon(1). F(0) has four main subunits: a(1), b(1), b'(1) and c(10-14). The alpha and beta chains form an alternating ring which encloses part of the gamma chain. F(1) is attached to F(0) by a central stalk formed by the gamma and epsilon chains, while a peripheral stalk is formed by the delta, b and b' chains.

It localises to the plastid. Its subcellular location is the chloroplast thylakoid membrane. F(1)F(0) ATP synthase produces ATP from ADP in the presence of a proton or sodium gradient. F-type ATPases consist of two structural domains, F(1) containing the extramembraneous catalytic core and F(0) containing the membrane proton channel, linked together by a central stalk and a peripheral stalk. During catalysis, ATP synthesis in the catalytic domain of F(1) is coupled via a rotary mechanism of the central stalk subunits to proton translocation. Its function is as follows. Component of the F(0) channel, it forms part of the peripheral stalk, linking F(1) to F(0). This chain is ATP synthase subunit b, chloroplastic, found in Atropa belladonna (Belladonna).